The sequence spans 61 residues: Small ribosomal subunit protein uS14 (61 aa).

The Zn(2+) site is built by Cys-24, Cys-27, Cys-40, and Cys-43.

Belongs to the universal ribosomal protein uS14 family. Zinc-binding uS14 subfamily. Part of the 30S ribosomal subunit. Contacts proteins S3 and S10. Zn(2+) is required as a cofactor.

Binds 16S rRNA, required for the assembly of 30S particles and may also be responsible for determining the conformation of the 16S rRNA at the A site. This chain is Small ribosomal subunit protein uS14, found in Dictyoglomus turgidum (strain DSM 6724 / Z-1310).